A 388-amino-acid chain; its full sequence is Mannitol-1-phosphate 5-dehydrogenase (388 aa).

NAD(+) is bound at residue 4–15 (AVHFGAGNIGRG).

This sequence belongs to the mannitol dehydrogenase family.

The catalysed reaction is D-mannitol 1-phosphate + NAD(+) = beta-D-fructose 6-phosphate + NADH + H(+). The chain is Mannitol-1-phosphate 5-dehydrogenase from Lactococcus lactis subsp. cremoris (strain MG1363).